Here is a 77-residue protein sequence, read N- to C-terminus: Envelope protein US9 homolog (77 aa).

Positions 12–13 (LL) match the Di-leucine internalization motif motif.

This sequence belongs to the alphaherpesvirinae envelope protein US9 family.

This chain is Envelope protein US9 homolog, found in Chlorocebus aethiops (Green monkey).